Reading from the N-terminus, the 98-residue chain is Small ribosomal subunit protein bS20 (98 aa).

It belongs to the bacterial ribosomal protein bS20 family.

Its function is as follows. Binds directly to 16S ribosomal RNA. This Parasynechococcus marenigrum (strain WH8102) protein is Small ribosomal subunit protein bS20.